A 417-amino-acid polypeptide reads, in one-letter code: Serine hydroxymethyltransferase 1 (417 aa).

Residues L121 and 125–127 (GHL) contribute to the (6S)-5,6,7,8-tetrahydrofolate site. At K229 the chain carries N6-(pyridoxal phosphate)lysine. (6S)-5,6,7,8-tetrahydrofolate is bound at residue 355 to 357 (SPF).

Belongs to the SHMT family. Homodimer. It depends on pyridoxal 5'-phosphate as a cofactor.

Its subcellular location is the cytoplasm. The enzyme catalyses (6R)-5,10-methylene-5,6,7,8-tetrahydrofolate + glycine + H2O = (6S)-5,6,7,8-tetrahydrofolate + L-serine. Its pathway is one-carbon metabolism; tetrahydrofolate interconversion. It participates in amino-acid biosynthesis; glycine biosynthesis; glycine from L-serine: step 1/1. Its function is as follows. Catalyzes the reversible interconversion of serine and glycine with tetrahydrofolate (THF) serving as the one-carbon carrier. This reaction serves as the major source of one-carbon groups required for the biosynthesis of purines, thymidylate, methionine, and other important biomolecules. Also exhibits THF-independent aldolase activity toward beta-hydroxyamino acids, producing glycine and aldehydes, via a retro-aldol mechanism. This Pectobacterium atrosepticum (strain SCRI 1043 / ATCC BAA-672) (Erwinia carotovora subsp. atroseptica) protein is Serine hydroxymethyltransferase 1.